The following is a 591-amino-acid chain: Cytidine monophosphate-N-acetylneuraminic acid hydroxylase (591 aa).

Residues 16–114 (LASAEVESLK…IENDDENGVS (99 aa)) form the Rieske domain. [2Fe-2S] cluster contacts are provided by Cys56, His58, Cys77, and His80.

Belongs to the CMP-Neu5Ac hydroxylase family. [2Fe-2S] cluster serves as cofactor.

The protein localises to the cytoplasm. It catalyses the reaction CMP-N-acetyl-beta-neuraminate + 2 Fe(II)-[cytochrome b5] + O2 + 2 H(+) = CMP-N-glycoloyl-beta-neuraminate + 2 Fe(III)-[cytochrome b5] + H2O. It participates in amino-sugar metabolism; N-acetylneuraminate metabolism. In terms of biological role, sialic acids are components of carbohydrate chains of glycoconjugates and are involved in cell-cell recognition and cell-pathogen interactions. Catalyzes the conversion of CMP-N-acetylneuraminic acid (CMP-Neu5Ac) into its hydroxylated derivative CMP-N-glycolylneuraminic acid (CMP-Neu5Gc), a sialic acid abundantly expressed at the surface of many cells. In Xenopus laevis (African clawed frog), this protein is Cytidine monophosphate-N-acetylneuraminic acid hydroxylase (cmah).